A 242-amino-acid chain; its full sequence is 6-carboxyhexanoate--CoA ligase (242 aa).

It belongs to the BioW family. As to quaternary structure, homodimer. It depends on Mg(2+) as a cofactor.

It catalyses the reaction heptanedioate + ATP + CoA = 6-carboxyhexanoyl-CoA + AMP + diphosphate. It functions in the pathway metabolic intermediate metabolism; pimeloyl-CoA biosynthesis; pimeloyl-CoA from pimelate: step 1/1. In terms of biological role, catalyzes the transformation of pimelate into pimeloyl-CoA with concomitant hydrolysis of ATP to AMP. The sequence is that of 6-carboxyhexanoate--CoA ligase from Veillonella parvula (strain ATCC 10790 / DSM 2008 / CCUG 5123 / JCM 12972 / NCTC 11810 / Te3) (Veillonella alcalescens).